Here is a 287-residue protein sequence, read N- to C-terminus: ATP synthase gamma chain (287 aa).

The protein belongs to the ATPase gamma chain family. F-type ATPases have 2 components, CF(1) - the catalytic core - and CF(0) - the membrane proton channel. CF(1) has five subunits: alpha(3), beta(3), gamma(1), delta(1), epsilon(1). CF(0) has three main subunits: a, b and c.

It localises to the cell inner membrane. Its function is as follows. Produces ATP from ADP in the presence of a proton gradient across the membrane. The gamma chain is believed to be important in regulating ATPase activity and the flow of protons through the CF(0) complex. The protein is ATP synthase gamma chain of Yersinia pestis.